The sequence spans 131 residues: Cruxhalorhodopsin-1 (131 aa).

The chain crosses the membrane as a helical span at residues 1–11 (PMILLALGLLA). Residues 12 to 14 (DTD) lie on the Cytoplasmic side of the membrane. The helical transmembrane segment at 15 to 38 (IASLFTAITMDIGMCVTGLAAALI) threads the bilayer. Over 39 to 41 (TSS) the chain is Extracellular. The chain crosses the membrane as a helical span at residues 42-64 (HLLRWVFYGISCAFFVAVLYVLL). The Cytoplasmic portion of the chain corresponds to 65-76 (VQWPADAEAAGT). Residues 77-100 (SEIFGTLKILTVVLWLGYPILWAL) traverse the membrane as a helical segment. Residues 101–109 (GSEGVALLS) are Extracellular-facing. The chain crosses the membrane as a helical span at residues 110-131 (VGVTSWGYSGLDILAKYVFAFI). The residue at position 125 (K125) is an N6-(retinylidene)lysine.

The protein belongs to the archaeal/bacterial/fungal opsin family.

The protein localises to the cell membrane. Light-driven chloride pump. This chain is Cruxhalorhodopsin-1 (choP1), found in Haloarcula argentinensis.